The chain runs to 294 residues: Survival motor neuron protein (294 aa).

Gly residues predominate over residues 1–12 (MAMSSGGSGGGV). The disordered stretch occupies residues 1–32 (MAMSSGGSGGGVPEQEDSVLFRRGTGQSDDSD). The residue at position 2 (Ala-2) is an N-acetylalanine. Phosphoserine; by PKA occurs at positions 4, 5, and 8. Residues 13-44 (PEQEDSVLFRRGTGQSDDSDIWDDTALIKAYD) form a P1 (binding site for GEMIN2) region. Thr-25 carries the post-translational modification Phosphothreonine. Phosphoserine is present on residues Ser-28 and Ser-31. A Glycyl lysine isopeptide (Lys-Gly) (interchain with G-Cter in SUMO2) cross-link involves residue Lys-51. The segment at 58–88 (DICETSGKPKTTPKRKPAKKNKSQKKNTAAP) is disordered. Residues 68-82 (TTPKRKPAKKNKSQK) are compositionally biased toward basic residues. The residue at position 69 (Thr-69) is a Phosphothreonine. Thr-85 carries the post-translational modification Phosphothreonine; by PKA. One can recognise a Tudor domain in the interval 91-151 (QWKVGDKCSA…LSPISEVANN (61 aa)). The tract at residues 97-209 (KCSAIWSEDG…MPGPRLGPGK (113 aa)) is required for interaction with RPP20/POP7. A compositionally biased stretch (low complexity) spans 156–166 (AQENENESQVS). The tract at residues 156–222 (AQENENESQV…KFNGPPPPPP (67 aa)) is disordered. Ser-187 carries the phosphoserine; by PKA modification. Residues 194–204 (LPPPPPMPGPR) are compositionally biased toward pro residues. A Glycyl lysine isopeptide (Lys-Gly) (interchain with G-Cter in SUMO2) cross-link involves residue Lys-209. Positions 240–267 (PPIIPPPPPICPDSLDDADALGSMLISW) are P2 (binding site for SM B). The tract at residues 279-294 (GFRQNQKEGRCSHSLN) is required for interaction with SYNCRIP.

Belongs to the SMN family. Homooligomer; may form higher order homooligomers in the dimer to octamer range. Part of the core SMN complex that contains SMN1, GEMIN2/SIP1, DDX20/GEMIN3, GEMIN4, GEMIN5, GEMIN6, GEMIN7, GEMIN8 and STRAP/UNRIP. Part of the SMN-Sm complex that contains SMN1, GEMIN2/SIP1, DDX20/GEMIN3, GEMIN4, GEMIN5, GEMIN6, GEMIN7, GEMIN8, STRAP/UNRIP and the Sm proteins SNRPB, SNRPD1, SNRPD2, SNRPD3, SNRPE, SNRPF and SNRPG. Component of an import snRNP complex composed of KPNB1, RNUT1, SMN1 and ZNF259. Interacts with DDX20, FBL, NOLA1, RNUT1, SYNCRIP and with several spliceosomal snRNP core Sm proteins, including SNRPB, SNRPD1, SNRPD2, SNRPD3, SNRPE and ILF3. Interacts with GEMIN2; the interaction is direct. Interacts with GEMIN3; the interaction is direct. Interacts with GEMIN8; the interaction is direct. Interacts with SNRPB; the interaction is direct. Interacts (via Tudor domain) with SNRPD1 (via C-terminus); the interaction is direct. Interacts with SNRPD2; the interaction is direct. Interacts (via Tudor domain) with SNRPD3 (via C-terminus); the interaction is direct. Interacts with SNRPE; the interaction is direct. Interacts with OSTF1, LSM10, LSM11 and RPP20/POP7. Interacts (via C-terminal region) with ZPR1 (via C-terminal region). Interacts (via Tudor domain) with COIL. Interacts with SETX; recruits SETX to POLR2A. Interacts with POLR2A (via the C-terminal domain (CTD)). Interacts with PRMT5. Interacts with XRN2. Interacts (via C-terminus) with FMR1 (via C-terminus); the interaction is direct and occurs in a RNA-independent manner. Interacts (via Tudor domain) with SF3B2 ('Arg-508'-methylated form). Interacts with WRAP53/TCAB1. Interacts (via Tudor domain) with ELAVL4 in an RNA-independent manner; the interaction is required for localization of ELAVL4 to RNA granules. Interacts with FRG1.

It is found in the nucleus. Its subcellular location is the gem. The protein resides in the cajal body. It localises to the cytoplasm. The protein localises to the cytoplasmic granule. It is found in the perikaryon. Its subcellular location is the cell projection. The protein resides in the neuron projection. It localises to the axon. The protein localises to the myofibril. It is found in the sarcomere. Its subcellular location is the z line. Its function is as follows. The SMN complex catalyzes the assembly of small nuclear ribonucleoproteins (snRNPs), the building blocks of the spliceosome, and thereby plays an important role in the splicing of cellular pre-mRNAs. Most spliceosomal snRNPs contain a common set of Sm proteins SNRPB, SNRPD1, SNRPD2, SNRPD3, SNRPE, SNRPF and SNRPG that assemble in a heptameric protein ring on the Sm site of the small nuclear RNA to form the core snRNP (Sm core). In the cytosol, the Sm proteins SNRPD1, SNRPD2, SNRPE, SNRPF and SNRPG are trapped in an inactive 6S pICln-Sm complex by the chaperone CLNS1A that controls the assembly of the core snRNP. To assemble core snRNPs, the SMN complex accepts the trapped 5Sm proteins from CLNS1A forming an intermediate. Binding of snRNA inside 5Sm ultimately triggers eviction of the SMN complex, thereby allowing binding of SNRPD3 and SNRPB to complete assembly of the core snRNP. Within the SMN complex, SMN1 acts as a structural backbone and together with GEMIN2 it gathers the Sm complex subunits. Ensures the correct splicing of U12 intron-containing genes that may be important for normal motor and proprioceptive neurons development. Also required for resolving RNA-DNA hybrids created by RNA polymerase II, that form R-loop in transcription terminal regions, an important step in proper transcription termination. May also play a role in the metabolism of small nucleolar ribonucleoprotein (snoRNPs). This chain is Survival motor neuron protein (SMN1), found in Macaca fascicularis (Crab-eating macaque).